The primary structure comprises 341 residues: Methionine import ATP-binding protein MetN (341 aa).

The 240-residue stretch at 2-241 (IELNQIVKRY…PQHDVTKRFV (240 aa)) folds into the ABC transporter domain. An ATP-binding site is contributed by 38–45 (GFSGAGKS).

This sequence belongs to the ABC transporter superfamily. Methionine importer (TC 3.A.1.24) family. As to quaternary structure, the complex is composed of two ATP-binding proteins (MetN), two transmembrane proteins (MetI) and a solute-binding protein (MetQ).

Its subcellular location is the cell membrane. It catalyses the reaction L-methionine(out) + ATP + H2O = L-methionine(in) + ADP + phosphate + H(+). The catalysed reaction is D-methionine(out) + ATP + H2O = D-methionine(in) + ADP + phosphate + H(+). Functionally, part of the ABC transporter complex MetNIQ involved in methionine import. Responsible for energy coupling to the transport system. This Staphylococcus saprophyticus subsp. saprophyticus (strain ATCC 15305 / DSM 20229 / NCIMB 8711 / NCTC 7292 / S-41) protein is Methionine import ATP-binding protein MetN.